We begin with the raw amino-acid sequence, 768 residues long: Actin filament-associated protein 1-like 1 (768 aa).

A disordered region spans residues 83–145 (LRDMSDDGEP…GKSPEYISSH (63 aa)). Serine 87, serine 93, serine 97, serine 103, and serine 153 each carry phosphoserine. Polar residues predominate over residues 165-185 (SYPTTRMNGELKNSYNDSDAM). Residues 165 to 211 (SYPTTRMNGELKNSYNDSDAMSSSYESYDEEEEEEKGRQPKHQWPSE) form a disordered region. The PH 1 domain occupies 220–316 (DCRICAFLLR…WLKVIREVSR (97 aa)). A phosphoserine mark is found at serine 329 and serine 343. Positions 340 to 349 (KRLSQEKQNS) are enriched in basic and acidic residues. Residues 340–382 (KRLSQEKQNSDSDSLGMNDSGSTLGRREACEHGKGKKNSLAEL) are disordered. Over residues 350-362 (DSDSLGMNDSGST) the composition is skewed to polar residues. The PH 2 domain occupies 418–512 (EVPCCGYLNV…WLGLLLVEMG (95 aa)). At tyrosine 557 the chain carries Phosphotyrosine. A disordered region spans residues 564-609 (KVQDEEPQRPTGAQVKRHASSCSEKSHRADPQVKVKRHASSANQYK). Residues 587-596 (EKSHRADPQV) show a composition bias toward basic and acidic residues. A coiled-coil region spans residues 611–701 (GKNRAEEDAR…AVKERLQQSL (91 aa)). The tract at residues 705–768 (PALGLSVSNK…KAKEWEMKKT (64 aa)) is disordered. Over residues 710–734 (SVSNKNKSQDTTNKPQSNAPEQSLP) the composition is skewed to polar residues. Position 747 is a phosphoserine (serine 747). Residues 759-768 (KAKEWEMKKT) show a composition bias toward basic and acidic residues.

Interacts with CTTN.

It localises to the cytoplasm. The protein localises to the cell projection. The protein resides in the podosome. It is found in the invadopodium. Its subcellular location is the cytoskeleton. It localises to the stress fiber. In terms of biological role, may be involved in podosome and invadosome formation. The chain is Actin filament-associated protein 1-like 1 (Afap1l1) from Mus musculus (Mouse).